We begin with the raw amino-acid sequence, 379 residues long: SUN domain-containing protein 5 (379 aa).

The disordered stretch occupies residues 1 to 45 (MPRSSRSPGDPGALLEDVAHNPRPRRIAQRGRNTSRMAEDTSPNM). The Nuclear segment spans residues 1 to 105 (MPRSSRSPGD…LLCQKLMEKT (105 aa)). Positions 31-45 (GRNTSRMAEDTSPNM) are enriched in polar residues. Residues 106-122 (GILLLCAFGFWMFSIHL) form a helical membrane-spanning segment. Residues 123-379 (PSKMKVWQDD…PHQNPYPKRD (257 aa)) lie on the Perinuclear space side of the membrane. Residues 141–182 (LRLYQEKVRHHSGEIQDLRGSMNQLIAKLQEMEAMSDEQKMA) adopt a coiled-coil conformation. One can recognise an SUN domain in the interval 205-364 (GASIDFEHTS…YRVRVHGSVA (160 aa)).

Probable homotrimer. Interacts with DNAJB13. Highly glycosylated in the Golgi apparatus during spermiogenesis. As to expression, sperm (at protein level). Widely expressed. Conflictingly shown to be specifically expressed in testis.

The protein localises to the nucleus inner membrane. It is found in the golgi apparatus. Plays an essential role in anchoring sperm head to the tail. Is responsible for the attachment of the coupling apparatus to the sperm nuclear envelope. The polypeptide is SUN domain-containing protein 5 (SUN5) (Homo sapiens (Human)).